The following is a 127-amino-acid chain: Multifunctional methyltransferase subunit trm112 (127 aa).

In terms of domain architecture, TRM112 spans K2–P123.

The protein belongs to the TRM112 family. As to quaternary structure, heterodimer of mtq2-rmt-1/trm112, forming the eRF1 methyltransferase. Rmt-1/trm112 is necessary for the solubility and activity of the catalytic subunit mtq2. Interacts with trm11; required for full tRNA methyltransferase activity. Interacts with bud23; required for full rRNA methyltransferase activity.

The protein resides in the cytoplasm. It localises to the nucleus. Functionally, acts as an activator of both rRNA/tRNA and protein methyltransferases. Together with methyltransferase mtq2, required for the methylation of eRF1 on 'Gln-182'. Together with methyltransferase trm11, required for the formation of 2-methylguanosine at position 10 (m2G10) in tRNA. Together with methyltransferase bud23, required for the formation of a 7-methylguanine in 18S rRNA. Involved in biogenesis of both 40S and 60S ribosomal subunits. The polypeptide is Multifunctional methyltransferase subunit trm112 (rmt-1) (Neurospora crassa (strain ATCC 24698 / 74-OR23-1A / CBS 708.71 / DSM 1257 / FGSC 987)).